A 911-amino-acid chain; its full sequence is Protein translocase subunit SecA (911 aa).

Residues Gln-87, Gly-105–Thr-109, and Asp-510 each bind ATP. Zn(2+) is bound by residues Cys-896, Cys-898, Cys-907, and His-908.

Belongs to the SecA family. Monomer and homodimer. Part of the essential Sec protein translocation apparatus which comprises SecA, SecYEG and auxiliary proteins SecDF-YajC and YidC. Requires Zn(2+) as cofactor.

The protein resides in the cell inner membrane. The protein localises to the cytoplasm. It carries out the reaction ATP + H2O + cellular proteinSide 1 = ADP + phosphate + cellular proteinSide 2.. In terms of biological role, part of the Sec protein translocase complex. Interacts with the SecYEG preprotein conducting channel. Has a central role in coupling the hydrolysis of ATP to the transfer of proteins into and across the cell membrane, serving both as a receptor for the preprotein-SecB complex and as an ATP-driven molecular motor driving the stepwise translocation of polypeptide chains across the membrane. In Acinetobacter baumannii (strain SDF), this protein is Protein translocase subunit SecA.